The primary structure comprises 472 residues: tRNA-2-methylthio-N(6)-dimethylallyladenosine synthase (472 aa).

Positions 22 to 138 (RSYWITTFGC…LETLLQQVDS (117 aa)) constitute an MTTase N-terminal domain. [4Fe-4S] cluster contacts are provided by Cys-31, Cys-67, Cys-101, Cys-173, Cys-177, and Cys-180. Residues 159–396 (RDSAICGWVN…NALVERNARE (238 aa)) enclose the Radical SAM core domain. The TRAM domain maps to 399–467 (IRYQGRTEEV…SFSLSGTPLP (69 aa)).

The protein belongs to the methylthiotransferase family. MiaB subfamily. Monomer. Requires [4Fe-4S] cluster as cofactor.

The protein localises to the cytoplasm. It carries out the reaction N(6)-dimethylallyladenosine(37) in tRNA + (sulfur carrier)-SH + AH2 + 2 S-adenosyl-L-methionine = 2-methylsulfanyl-N(6)-dimethylallyladenosine(37) in tRNA + (sulfur carrier)-H + 5'-deoxyadenosine + L-methionine + A + S-adenosyl-L-homocysteine + 2 H(+). Catalyzes the methylthiolation of N6-(dimethylallyl)adenosine (i(6)A), leading to the formation of 2-methylthio-N6-(dimethylallyl)adenosine (ms(2)i(6)A) at position 37 in tRNAs that read codons beginning with uridine. The protein is tRNA-2-methylthio-N(6)-dimethylallyladenosine synthase of Synechococcus sp. (strain CC9902).